A 142-amino-acid polypeptide reads, in one-letter code: SsrA-binding protein (142 aa).

This sequence belongs to the SmpB family.

It is found in the cytoplasm. Functionally, required for rescue of stalled ribosomes mediated by trans-translation. Binds to transfer-messenger RNA (tmRNA), required for stable association of tmRNA with ribosomes. tmRNA and SmpB together mimic tRNA shape, replacing the anticodon stem-loop with SmpB. tmRNA is encoded by the ssrA gene; the 2 termini fold to resemble tRNA(Ala) and it encodes a 'tag peptide', a short internal open reading frame. During trans-translation Ala-aminoacylated tmRNA acts like a tRNA, entering the A-site of stalled ribosomes, displacing the stalled mRNA. The ribosome then switches to translate the ORF on the tmRNA; the nascent peptide is terminated with the 'tag peptide' encoded by the tmRNA and targeted for degradation. The ribosome is freed to recommence translation, which seems to be the essential function of trans-translation. The polypeptide is SsrA-binding protein (Mycoplasma mobile (strain ATCC 43663 / 163K / NCTC 11711) (Mesomycoplasma mobile)).